Reading from the N-terminus, the 62-residue chain is Prokaryotic ubiquitin-like protein Pup (62 aa).

A disordered region spans residues 1 to 29; it reads MSQQSLNAPGPGAEDGNDPEAVTGGQTFA. The interval 21-56 is ARC ATPase binding; the sequence is AVTGGQTFASAQAADDLLDEIDSVLESNAETFVRSF. A Deamidated glutamine modification is found at Gln62. An Isoglutamyl lysine isopeptide (Gln-Lys) (interchain with K-? in acceptor proteins) cross-link involves residue Gln62.

Belongs to the prokaryotic ubiquitin-like protein family. In terms of assembly, strongly interacts with the proteasome-associated ATPase ARC through a hydrophobic interface; the interacting region of Pup lies in its C-terminal half. There is one Pup binding site per ARC hexamer ring. In terms of processing, is modified by deamidation of its C-terminal glutamine to glutamate by the deamidase Dop, a prerequisite to the subsequent pupylation process.

It participates in protein degradation; proteasomal Pup-dependent pathway. Protein modifier that is covalently attached to lysine residues of substrate proteins, thereby targeting them for proteasomal degradation. The tagging system is termed pupylation. This Brachybacterium faecium (strain ATCC 43885 / DSM 4810 / JCM 11609 / LMG 19847 / NBRC 14762 / NCIMB 9860 / 6-10) protein is Prokaryotic ubiquitin-like protein Pup.